The chain runs to 354 residues: Protein RecA (354 aa).

Position 67–74 (67–74) interacts with ATP; that stretch reads GPESSGKT. Residues 331–354 form a disordered region; it reads NQDSTPDFSVDDNGEGVKETNEDF. Residues 345 to 354 are compositionally biased toward basic and acidic residues; the sequence is EGVKETNEDF.

Belongs to the RecA family.

It is found in the cytoplasm. Can catalyze the hydrolysis of ATP in the presence of single-stranded DNA, the ATP-dependent uptake of single-stranded DNA by duplex DNA, and the ATP-dependent hybridization of homologous single-stranded DNAs. It interacts with LexA causing its activation and leading to its autocatalytic cleavage. The protein is Protein RecA of Citrobacter koseri (strain ATCC BAA-895 / CDC 4225-83 / SGSC4696).